Consider the following 343-residue polypeptide: C-X-C chemokine receptor type 6 (343 aa).

The Extracellular portion of the chain corresponds to 1-33 (MAEYDHYEDDGFLNSFNDSSQEEHQDFLQFRKV). The N-linked (GlcNAc...) asparagine glycan is linked to Asn-17. Residues 34-60 (FLPCMYLVVFVCGLVGNSLVLVISIFY) form a helical membrane-spanning segment. Over 61–69 (HKLQSLTDV) the chain is Cytoplasmic. A helical membrane pass occupies residues 70-90 (FLVNLPLADLVFVCTLPFWTY). Topologically, residues 91–104 (AGIHEWIFGQVMCK) are extracellular. A disulfide bond links Cys-103 and Cys-181. A helical membrane pass occupies residues 105–126 (TLLGVYTINFYTSMLILTCITV). The Cytoplasmic segment spans residues 127–144 (DRFIVVVKATKAYNQQAK). The chain crosses the membrane as a helical span at residues 145 to 165 (RMTWGKVICLLIWVISLLVSL). At 166-188 (PQIIYGNVFNLDKLICGYHDEEI) the chain is on the extracellular side. The helical transmembrane segment at 189 to 216 (STVVLATQMTLGFFLPLLAMIVCYSVII) threads the bilayer. Residues 217–232 (KTLLHAGGFQKHRSLK) lie on the Cytoplasmic side of the membrane. A helical transmembrane segment spans residues 233–260 (IIFLVMAVFLLTQTPFNLVKLIRSTRWE). Over 261–276 (YYAMTSFHYTIIVTEA) the chain is Extracellular. The chain crosses the membrane as a helical span at residues 277-294 (IAYLRACLNPVLYAFVSL). The Cytoplasmic segment spans residues 295-343 (KFRKNFWKLVKDIGCLPYLGVSHQWKSSEDNSKTFSASHNVEATSMFQL).

It belongs to the G-protein coupled receptor 1 family.

Its subcellular location is the cell membrane. Receptor for the C-X-C chemokine CXCL16. Used as a coreceptor by SIVs and by strains of HIV-2 and m-tropic HIV-1. The polypeptide is C-X-C chemokine receptor type 6 (CXCR6) (Macaca fascicularis (Crab-eating macaque)).